A 231-amino-acid chain; its full sequence is Membrane protein YknW (231 aa).

A run of 5 helical transmembrane segments spans residues 38–58, 93–113, 128–148, 171–191, and 205–225; these read VWGP…LQSL, GAII…WLCV, LSLF…IVAF, LASV…LLAI, and WISA…SGLI.

In terms of assembly, interacts with a complex composed of YknX, YknY and YknZ.

It localises to the cell membrane. Functionally, part of an unusual four-component transporter, which is required for protection against the killing factor SdpC (sporulation-delaying protein). Has a role in the assembly of the YknXYZ complex. The sequence is that of Membrane protein YknW (yknW) from Bacillus subtilis (strain 168).